The chain runs to 237 residues: Type III pantothenate kinase (237 aa).

Residue 6-13 (DAGNSRVK) participates in ATP binding. Residues Tyr-86 and 93-96 (GADR) each bind substrate. Asp-95 acts as the Proton acceptor in catalysis. Residue Thr-118 coordinates ATP. Residue Thr-168 coordinates substrate.

This sequence belongs to the type III pantothenate kinase family. In terms of assembly, homodimer. NH4(+) serves as cofactor. Requires K(+) as cofactor.

It is found in the cytoplasm. The catalysed reaction is (R)-pantothenate + ATP = (R)-4'-phosphopantothenate + ADP + H(+). It functions in the pathway cofactor biosynthesis; coenzyme A biosynthesis; CoA from (R)-pantothenate: step 1/5. Catalyzes the phosphorylation of pantothenate (Pan), the first step in CoA biosynthesis. In Chromobacterium violaceum (strain ATCC 12472 / DSM 30191 / JCM 1249 / CCUG 213 / NBRC 12614 / NCIMB 9131 / NCTC 9757 / MK), this protein is Type III pantothenate kinase.